The sequence spans 160 residues: Transcription elongation factor GreA (160 aa).

Residues 1 to 71 (MAEKTYPMTL…GQISTLETKI (71 aa)) are a coiled coil.

The protein belongs to the GreA/GreB family.

Functionally, necessary for efficient RNA polymerase transcription elongation past template-encoded arresting sites. The arresting sites in DNA have the property of trapping a certain fraction of elongating RNA polymerases that pass through, resulting in locked ternary complexes. Cleavage of the nascent transcript by cleavage factors such as GreA or GreB allows the resumption of elongation from the new 3'terminus. GreA releases sequences of 2 to 3 nucleotides. This is Transcription elongation factor GreA from Streptococcus pyogenes serotype M3 (strain ATCC BAA-595 / MGAS315).